The following is a 228-amino-acid chain: Protein ULTRAPETALA 2 (228 aa).

Positions 14 to 121 (EELQEISGVH…NKALKNSNVS (108 aa)) constitute an SAND domain.

Expressed in influorescence, pollen and siliques, with a higher expression in influorescence.

It localises to the cytoplasm. It is found in the nucleus. Putative transcription factor that acts as a key negative regulator of cell accumulation in shoot and floral meristems. Negatively regulates the size of the WUSCHEL (WUS)-expressing organizing center in inflorescence meristems. May act by down-regulating expression of WUS. Can compensate for mutant ULT1 protein when overexpressed. The chain is Protein ULTRAPETALA 2 (ULT2) from Arabidopsis thaliana (Mouse-ear cress).